A 231-amino-acid chain; its full sequence is Octanoyl-[acyl-carrier-protein]:protein N-octanoyltransferase LIPT2, mitochondrial (231 aa).

The region spanning 41 to 224 (GTKAGVLLVC…AFKETFKCTL (184 aa)) is the BPL/LPL catalytic domain. K43 carries the N6-succinyllysine modification. Residues 85 to 92 (RGGLATFH), 154 to 156 (AIG), and 167 to 169 (GLA) contribute to the substrate site. C185 functions as the Acyl-thioester intermediate in the catalytic mechanism.

Belongs to the LipB family.

The protein resides in the mitochondrion. It carries out the reaction octanoyl-[ACP] + L-lysyl-[protein] = N(6)-octanoyl-L-lysyl-[protein] + holo-[ACP] + H(+). It participates in protein modification; protein lipoylation via endogenous pathway; protein N(6)-(lipoyl)lysine from octanoyl-[acyl-carrier-protein]: step 1/2. Catalyzes the transfer of endogenously produced octanoic acid from octanoyl-acyl-carrier-protein onto the lipoyl domains of lipoate-dependent enzymes such as the protein H of the glycine cleavage system (GCSH). Lipoyl-ACP can also act as a substrate although octanoyl-ACP is likely to be the physiological substrate. The sequence is that of Octanoyl-[acyl-carrier-protein]:protein N-octanoyltransferase LIPT2, mitochondrial from Mus musculus (Mouse).